A 208-amino-acid chain; its full sequence is Ribosomal RNA large subunit methyltransferase E (208 aa).

S-adenosyl-L-methionine-binding residues include Gly-63, Trp-65, Asp-83, Asp-99, and Asp-124. The active-site Proton acceptor is the Lys-164.

This sequence belongs to the class I-like SAM-binding methyltransferase superfamily. RNA methyltransferase RlmE family.

The protein resides in the cytoplasm. It carries out the reaction uridine(2552) in 23S rRNA + S-adenosyl-L-methionine = 2'-O-methyluridine(2552) in 23S rRNA + S-adenosyl-L-homocysteine + H(+). In terms of biological role, specifically methylates the uridine in position 2552 of 23S rRNA at the 2'-O position of the ribose in the fully assembled 50S ribosomal subunit. This chain is Ribosomal RNA large subunit methyltransferase E, found in Salmonella agona (strain SL483).